The following is a 274-amino-acid chain: 2,3,4,5-tetrahydropyridine-2,6-dicarboxylate N-succinyltransferase (274 aa).

Arginine 104 and aspartate 141 together coordinate substrate.

Belongs to the transferase hexapeptide repeat family. In terms of assembly, homotrimer.

Its subcellular location is the cytoplasm. The enzyme catalyses (S)-2,3,4,5-tetrahydrodipicolinate + succinyl-CoA + H2O = (S)-2-succinylamino-6-oxoheptanedioate + CoA. The protein operates within amino-acid biosynthesis; L-lysine biosynthesis via DAP pathway; LL-2,6-diaminopimelate from (S)-tetrahydrodipicolinate (succinylase route): step 1/3. The protein is 2,3,4,5-tetrahydropyridine-2,6-dicarboxylate N-succinyltransferase of Photorhabdus laumondii subsp. laumondii (strain DSM 15139 / CIP 105565 / TT01) (Photorhabdus luminescens subsp. laumondii).